A 376-amino-acid chain; its full sequence is 23S rRNA (uracil(747)-C(5))-methyltransferase RlmC (376 aa).

[4Fe-4S] cluster contacts are provided by cysteine 3, cysteine 11, cysteine 14, and cysteine 87. Positions 212, 241, 262, and 307 each coordinate S-adenosyl-L-methionine. Cysteine 334 serves as the catalytic Nucleophile.

This sequence belongs to the class I-like SAM-binding methyltransferase superfamily. RNA M5U methyltransferase family. RlmC subfamily.

The catalysed reaction is uridine(747) in 23S rRNA + S-adenosyl-L-methionine = 5-methyluridine(747) in 23S rRNA + S-adenosyl-L-homocysteine + H(+). Functionally, catalyzes the formation of 5-methyl-uridine at position 747 (m5U747) in 23S rRNA. This is 23S rRNA (uracil(747)-C(5))-methyltransferase RlmC from Yersinia pseudotuberculosis serotype I (strain IP32953).